The primary structure comprises 170 residues: Adenine phosphoribosyltransferase (170 aa).

The protein belongs to the purine/pyrimidine phosphoribosyltransferase family. As to quaternary structure, homodimer.

It is found in the cytoplasm. It carries out the reaction AMP + diphosphate = 5-phospho-alpha-D-ribose 1-diphosphate + adenine. It participates in purine metabolism; AMP biosynthesis via salvage pathway; AMP from adenine: step 1/1. Functionally, catalyzes a salvage reaction resulting in the formation of AMP, that is energically less costly than de novo synthesis. The chain is Adenine phosphoribosyltransferase from Halothermothrix orenii (strain H 168 / OCM 544 / DSM 9562).